The sequence spans 140 residues: Putative septation protein SpoVG (140 aa).

Positions 88 to 127 (VAPQAGGLQGAEEPTAVEPAPQLQDESELPWEPGDDGEGA) are disordered. Residues 112–124 (DESELPWEPGDDG) are compositionally biased toward acidic residues.

It belongs to the SpoVG family.

Its function is as follows. Could be involved in septation. The polypeptide is Putative septation protein SpoVG (Symbiobacterium thermophilum (strain DSM 24528 / JCM 14929 / IAM 14863 / T)).